The following is a 352-amino-acid chain: UDP-N-acetylglucosamine--N-acetylmuramyl-(pentapeptide) pyrophosphoryl-undecaprenol N-acetylglucosamine transferase (352 aa).

Residues S195 and Q287 each contribute to the UDP-N-acetyl-alpha-D-glucosamine site.

Belongs to the glycosyltransferase 28 family. MurG subfamily.

It localises to the cell membrane. The enzyme catalyses Mur2Ac(oyl-L-Ala-gamma-D-Glu-L-Lys-D-Ala-D-Ala)-di-trans,octa-cis-undecaprenyl diphosphate + UDP-N-acetyl-alpha-D-glucosamine = beta-D-GlcNAc-(1-&gt;4)-Mur2Ac(oyl-L-Ala-gamma-D-Glu-L-Lys-D-Ala-D-Ala)-di-trans,octa-cis-undecaprenyl diphosphate + UDP + H(+). It participates in cell wall biogenesis; peptidoglycan biosynthesis. Functionally, cell wall formation. Catalyzes the transfer of a GlcNAc subunit on undecaprenyl-pyrophosphoryl-MurNAc-pentapeptide (lipid intermediate I) to form undecaprenyl-pyrophosphoryl-MurNAc-(pentapeptide)GlcNAc (lipid intermediate II). The protein is UDP-N-acetylglucosamine--N-acetylmuramyl-(pentapeptide) pyrophosphoryl-undecaprenol N-acetylglucosamine transferase of Streptococcus pneumoniae (strain CGSP14).